The following is a 114-amino-acid chain: Ribonuclease P protein component (114 aa).

Belongs to the RnpA family. As to quaternary structure, consists of a catalytic RNA component (M1 or rnpB) and a protein subunit.

The enzyme catalyses Endonucleolytic cleavage of RNA, removing 5'-extranucleotides from tRNA precursor.. RNaseP catalyzes the removal of the 5'-leader sequence from pre-tRNA to produce the mature 5'-terminus. It can also cleave other RNA substrates such as 4.5S RNA. The protein component plays an auxiliary but essential role in vivo by binding to the 5'-leader sequence and broadening the substrate specificity of the ribozyme. This chain is Ribonuclease P protein component, found in Legionella pneumophila (strain Paris).